A 207-amino-acid chain; its full sequence is Small ribosomal subunit protein uS4 (207 aa).

The span at 29–38 (QDKAKFDSKP) shows a compositional bias: basic and acidic residues. The tract at residues 29–54 (QDKAKFDSKPGQHGRTSGQRTSDYGL) is disordered. Polar residues predominate over residues 42-52 (GRTSGQRTSDY). One can recognise an S4 RNA-binding domain in the interval 97-160 (SRLDNVVYRM…KKQTRIAEAL (64 aa)).

This sequence belongs to the universal ribosomal protein uS4 family. In terms of assembly, part of the 30S ribosomal subunit. Contacts protein S5. The interaction surface between S4 and S5 is involved in control of translational fidelity.

Functionally, one of the primary rRNA binding proteins, it binds directly to 16S rRNA where it nucleates assembly of the body of the 30S subunit. With S5 and S12 plays an important role in translational accuracy. This Variovorax paradoxus (strain S110) protein is Small ribosomal subunit protein uS4.